The chain runs to 511 residues: MEMDYDLVMEDEFDALCLDVRRHHDSTSKTKYPAKLHARKVVRELGVDDGLIYLPGQPEISLEDSDQPRLFRQRRYFFYITGANFEDCTATYEVKHDKLTLWIPYVEPRQVLWFGSKPSAAECKRRYDVDEVRYTTQLSGFLRSFAAQPSPPVTYILHPKQAPDLGHGSQSQLCLDSSLLLPAMDRARVVKSDYEVAMVRRANNISSAAHRRVAERILRLTNEREIEAIIQAVCIASGSRSQAYPIIAGSGANGATLHYGSNNASLGGKQCVVIDAGCEWNCYASDITRTLPLSGAWTPKAAAIHAIVQRMQDECIAKVGPGAAWREIHLHAASVGMEGLLGLGILKGRREDVARAGTVAAFFPHGLGHHVGLDVHDVSGTLALSAAEGRGQQLDFGKRAMVTPSMLADMTRVSSSQDAVGGGQSKTQLLLPNMIVTVEPGIYFCREYLEGYFRSDPAHADFIDWDLLEEYYDVGGVRIEDCILVTEDGYENLTVAPKGDELLDVINKGKK.

Residues D275, D286, E439, and E480 each contribute to the Mn(2+) site.

It belongs to the peptidase M24B family. Mn(2+) is required as a cofactor.

The catalysed reaction is Release of any N-terminal amino acid, including proline, that is linked to proline, even from a dipeptide or tripeptide.. Its function is as follows. Catalyzes the removal of a penultimate prolyl residue from the N-termini of peptides. The chain is Probable Xaa-Pro aminopeptidase MAA_08947 from Metarhizium robertsii (strain ARSEF 23 / ATCC MYA-3075) (Metarhizium anisopliae (strain ARSEF 23)).